The primary structure comprises 1820 residues: Histone-lysine N-methyltransferase, H3 lysine-9 specific (1820 aa).

Disordered regions lie at residues 1-54, 74-251, 284-618, 634-681, 804-836, 850-893, 911-944, 966-996, 1063-1126, 1183-1270, 1296-1335, and 1385-1407; these read MPGA…TSMR, NLLP…TPVT, SLSD…APTK, SSER…KKAV, NVDD…SLSK, SSTL…VNSW, HAKK…EQLR, DVES…STDA, PLSV…NGAV, RYAV…DRTA, KASA…TSQQ, and RSEP…TDSD. Low complexity predominate over residues 11 to 31; it reads VDNPLVLDSSDSDDNLSGLPL. Residues 109–129 show a composition bias toward polar residues; sequence ADSSSPPENQNVISFLGNHSQ. Residues 152–169 are compositionally biased toward low complexity; sequence GGENIAGQNNEANAAQAA. Polar residues-rich tracts occupy residues 174-204 and 212-222; these read GTPS…SAIN and SIPQQSPSSRA. Low complexity-rich tracts occupy residues 226 to 236, 284 to 311, and 339 to 352; these read RSASIASSRSR, SLSD…TSTT, and TPAT…GPSA. Basic and acidic residues predominate over residues 361-370; it reads KSSDQKESPR. The segment covering 374–385 has biased composition (polar residues); that stretch reads SKQPSSPSSTHG. Low complexity predominate over residues 400 to 424; it reads SATSGKSSAASSRSKSRAPLSSRAA. Over residues 433 to 442 the composition is skewed to polar residues; it reads SKTTSVSSTH. Positions 443–459 are enriched in low complexity; the sequence is PPSRASPSSLPSQSQRQ. The span at 479–510 shows a compositional bias: polar residues; the sequence is TLSSGTGQSTPSKFSLPTSDVASNQKNKSTGL. 3 stretches are compositionally biased toward low complexity: residues 514–531, 551–563, and 594–618; these read PKKP…RTST, QSSS…IQTS, and TKAT…APTK. Polar residues-rich tracts occupy residues 643–662 and 810–827; these read GKSQ…TAAS and SAQP…SVSS. The span at 850–861 shows a compositional bias: low complexity; sequence SSTLGDSVSGLG. Positions 869–893 are enriched in polar residues; it reads TQSMPQSPLPTTNTNNSSGIEVNSW. Composition is skewed to basic and acidic residues over residues 917 to 944 and 966 to 983; these read KERE…EQLR and DVES…ETRK. Over residues 1076-1089 the composition is skewed to low complexity; it reads SSSSTSTPSLLSRS. The segment covering 1296–1320 has biased composition (low complexity); the sequence is KASAVSPVPSANRPSPAPSAKADLL. A Pre-SET domain is found at 1516–1585; it reads LGCDCDGPCD…ECMNRVIQRG (70 aa). Zn(2+)-binding residues include cysteine 1518, cysteine 1520, cysteine 1524, cysteine 1531, cysteine 1533, cysteine 1567, cysteine 1571, cysteine 1573, and cysteine 1577. An SET domain is found at 1590 to 1750; sequence TGIEIFKTKE…KHEELCISYK (161 aa). S-adenosyl-L-methionine is bound by residues 1600–1602, tyrosine 1643, arginine 1704, and 1707–1708; these read KGW and NH. A Zn(2+)-binding site is contributed by cysteine 1710. The disordered stretch occupies residues 1756–1794; that stretch reads DDIPSPEPVKKKKGGKGKKQMSKTSASAHPPEMTALNSD. A compositionally biased stretch (basic residues) spans 1765–1776; sequence KKKKGGKGKKQM. The Post-SET domain maps to 1800–1816; the sequence is VKDICRCGAKNCDGRMF. 3 residues coordinate Zn(2+): cysteine 1804, cysteine 1806, and cysteine 1811.

The protein belongs to the class V-like SAM-binding methyltransferase superfamily. Histone-lysine methyltransferase family. Suvar3-9 subfamily.

The protein localises to the nucleus. Its subcellular location is the chromosome. The catalysed reaction is N(6)-methyl-L-lysyl(9)-[histone H3] + S-adenosyl-L-methionine = N(6),N(6)-dimethyl-L-lysyl(9)-[histone H3] + S-adenosyl-L-homocysteine + H(+). It carries out the reaction L-lysyl(9)-[histone H3] + S-adenosyl-L-methionine = N(6)-methyl-L-lysyl(9)-[histone H3] + S-adenosyl-L-homocysteine + H(+). Its function is as follows. Histone methyltransferase that specifically dimethylates histone H3 to form H3K9me2. H3K9me2 represents a specific tag for epigenetic transcriptional repression by recruiting HP1 proteins to methylated histones. Mainly functions in heterochromatin regions, thereby playing a central role in the establishment of constitutive heterochromatin at centromeric regions. This is Histone-lysine N-methyltransferase, H3 lysine-9 specific from Cryptococcus neoformans var. grubii serotype A (strain H99 / ATCC 208821 / CBS 10515 / FGSC 9487) (Filobasidiella neoformans var. grubii).